A 77-amino-acid chain; its full sequence is U8-lycotoxin-Ls1e (77 aa).

The first 20 residues, 1–20, serve as a signal peptide directing secretion; that stretch reads MKLIIFTGLVLFAIVSLIEA. Residues 21–26 constitute a propeptide that is removed on maturation; it reads QAENEK.

Belongs to the neurotoxin 19 (CSTX) family. 08 (U8-Lctx) subfamily. Post-translationally, contains 4 disulfide bonds. Expressed by the venom gland.

The protein resides in the secreted. This chain is U8-lycotoxin-Ls1e, found in Lycosa singoriensis (Wolf spider).